The primary structure comprises 502 residues: ATP synthase subunit alpha (502 aa).

Position 169-176 (169-176 (GDRATGKT)) interacts with ATP.

Belongs to the ATPase alpha/beta chains family. As to quaternary structure, F-type ATPases have 2 components, CF(1) - the catalytic core - and CF(0) - the membrane proton channel. CF(1) has five subunits: alpha(3), beta(3), gamma(1), delta(1), epsilon(1). CF(0) has three main subunits: a(1), b(2) and c(9-12). The alpha and beta chains form an alternating ring which encloses part of the gamma chain. CF(1) is attached to CF(0) by a central stalk formed by the gamma and epsilon chains, while a peripheral stalk is formed by the delta and b chains.

It localises to the cell inner membrane. It catalyses the reaction ATP + H2O + 4 H(+)(in) = ADP + phosphate + 5 H(+)(out). In terms of biological role, produces ATP from ADP in the presence of a proton gradient across the membrane. The alpha chain is a regulatory subunit. This Hydrogenobaculum sp. (strain Y04AAS1) protein is ATP synthase subunit alpha.